Consider the following 410-residue polypeptide: Voltage-dependent chloride channel 2, chloroplastic (410 aa).

Topologically, residues 1 to 110 (MYQSMNLSFS…RHVSSSPSSR (110 aa)) are lumenal, thylakoid. The helical transmembrane segment at 111-131 (VILSLIPPVFFFTTVAILIAG) threads the bilayer. The Stromal segment spans residues 132-147 (YNSAVDLDWLPDFFPV). Residues 148–168 (LRASPLPYQLTAPALALLLVF) form a helical membrane-spanning segment. The Lumenal, thylakoid segment spans residues 169–315 (RTEASYSRFE…PLSYTRLTSR (147 aa)). The next 2 membrane-spanning stretches (helical) occupy residues 316-336 (FLVLWHLTLPVILWDDCHWNV) and 337-357 (VPATFISAASLFCIEEVGVLI). The Lumenal, thylakoid segment spans residues 358–410 (EEPFSMLALDELCAMVLSNSDEAVESKEVIRNRIIAKKRILEIKHSSNGWHKS).

It belongs to the anion channel-forming bestrophin (TC 1.A.46) family. Voltage-dependent chloride channel subfamily. Mostly expressed in flowers and, to a lower extent, in leaves, stems and roots.

The protein localises to the plastid. Its subcellular location is the chloroplast thylakoid membrane. It carries out the reaction chloride(in) = chloride(out). Voltage-dependent chloride (Cl) channel probably contributing to proton motive force (PMF) partitioning across the thylakoid membrane by anion influx into the lumen. Influences thylakoid ultrastructure, including lumen size and organization. The chain is Voltage-dependent chloride channel 2, chloroplastic from Arabidopsis thaliana (Mouse-ear cress).